The chain runs to 497 residues: Galactose/methyl galactoside import ATP-binding protein MglA 1 (497 aa).

2 consecutive ABC transporter domains span residues 6–243 and 256–494; these read LEMR…VGRD and GKVR…VMSM. 38–45 contributes to the ATP binding site; sequence GENGAGKS.

The protein belongs to the ABC transporter superfamily. Galactose/methyl galactoside importer (TC 3.A.1.2.3) family. In terms of assembly, the complex is composed of one ATP-binding protein (MglA), two transmembrane proteins (MglC) and a solute-binding protein (MglB).

Its subcellular location is the cell inner membrane. It catalyses the reaction D-galactose(out) + ATP + H2O = D-galactose(in) + ADP + phosphate + H(+). The enzyme catalyses methyl beta-D-galactoside(out) + ATP + H2O = methyl beta-D-galactoside(in) + ADP + phosphate + H(+). In terms of biological role, part of the ABC transporter complex MglABC involved in galactose/methyl galactoside import. Responsible for energy coupling to the transport system. The chain is Galactose/methyl galactoside import ATP-binding protein MglA 1 from Photobacterium profundum (strain SS9).